A 97-amino-acid polypeptide reads, in one-letter code: Cystatin-A (97 aa).

An N-acetylmethionine modification is found at Met-1. The short motif at Gln-46–Gly-50 is the Secondary area of contact element.

The protein belongs to the cystatin family.

It localises to the cytoplasm. This is an intracellular thiol proteinase inhibitor. In Mus musculus (Mouse), this protein is Cystatin-A (Csta).